A 194-amino-acid polypeptide reads, in one-letter code: Der GTPase-activating protein YihI (194 aa).

Positions 1-81 (MSRSKKTRRI…AKVKKDPRVG (81 aa)) are disordered. 2 stretches are compositionally biased toward basic and acidic residues: residues 9–23 (RISD…DKKP) and 36–47 (TRYELDVQAREE). The segment covering 59-70 (GSRNVITEQKTA) has biased composition (polar residues).

This sequence belongs to the YihI family. In terms of assembly, interacts with Der.

Functionally, a GTPase-activating protein (GAP) that modifies Der/EngA GTPase function. May play a role in ribosome biogenesis. This is Der GTPase-activating protein YihI from Haemophilus ducreyi (strain 35000HP / ATCC 700724).